Reading from the N-terminus, the 445-residue chain is Arginine biosynthesis bifunctional protein ArgJ, mitochondrial (445 aa).

Substrate is bound by residues Thr189, Lys215, Thr226, Glu312, Asn440, and Ser445. The active-site Nucleophile is Thr226.

This sequence belongs to the ArgJ family. As to quaternary structure, heterodimer of an alpha and a beta chain. Post-translationally, the alpha and beta chains are autoproteolytically processed from a single precursor protein within the mitochondrion.

Its subcellular location is the mitochondrion matrix. The enzyme catalyses N(2)-acetyl-L-ornithine + L-glutamate = N-acetyl-L-glutamate + L-ornithine. It carries out the reaction L-glutamate + acetyl-CoA = N-acetyl-L-glutamate + CoA + H(+). Its pathway is amino-acid biosynthesis; L-arginine biosynthesis; L-ornithine and N-acetyl-L-glutamate from L-glutamate and N(2)-acetyl-L-ornithine (cyclic): step 1/1. The protein operates within amino-acid biosynthesis; L-arginine biosynthesis; N(2)-acetyl-L-ornithine from L-glutamate: step 1/4. Its function is as follows. Catalyzes two activities which are involved in the cyclic version of arginine biosynthesis: the synthesis of acetylglutamate from glutamate and acetyl-CoA, and of ornithine by transacetylation between acetylornithine and glutamate. The polypeptide is Arginine biosynthesis bifunctional protein ArgJ, mitochondrial (Schizosaccharomyces pombe (strain 972 / ATCC 24843) (Fission yeast)).